The sequence spans 340 residues: Thermopsin (340 aa).

The signal sequence occupies residues 1-28 (MNFKSICLIILLSALIIPYIPQNIYFFP). The propeptide occupies 29–41 (HRNTTGATISSGL). Asn31, Asn65, Asn85, Asn117, Asn148, Asn197, Asn277, Asn287, Asn327, and Asn334 each carry an N-linked (GlcNAc...) asparagine glycan.

It belongs to the peptidase A5 family.

It is found in the secreted. The enzyme catalyses Specificity similar to pepsin A, prefers bulky hydrophobic side-chains on either side of the scissible bond.. In terms of biological role, may represent a new class of acid proteases. It digests proteins and peptides in acidic solution. In Sulfolobus acidocaldarius (strain ATCC 33909 / DSM 639 / JCM 8929 / NBRC 15157 / NCIMB 11770), this protein is Thermopsin (thpS).